A 334-amino-acid chain; its full sequence is Putative heme-binding peroxidase (334 aa).

His40 acts as the Proton acceptor in catalysis. His169 is a binding site for heme b. The active-site Tryptophan radical intermediate is Trp185.

This sequence belongs to the peroxidase family. Cytochrome c peroxidase subfamily. Requires heme b as cofactor.

Destroys radicals which are normally produced within the cells and which are toxic to biological systems. The chain is Putative heme-binding peroxidase from Cryptococcus neoformans var. neoformans serotype D (strain JEC21 / ATCC MYA-565) (Filobasidiella neoformans).